A 488-amino-acid polypeptide reads, in one-letter code: Cobyric acid synthase (488 aa).

The GATase cobBQ-type domain occupies 252-442 (RTRICVPILP…VHGLFASDAF (191 aa)). The active-site Nucleophile is the Cys-334. Residue His-434 is part of the active site.

This sequence belongs to the CobB/CobQ family. CobQ subfamily.

It functions in the pathway cofactor biosynthesis; adenosylcobalamin biosynthesis. Functionally, catalyzes amidations at positions B, D, E, and G on adenosylcobyrinic A,C-diamide. NH(2) groups are provided by glutamine, and one molecule of ATP is hydrogenolyzed for each amidation. This chain is Cobyric acid synthase, found in Xanthobacter autotrophicus (strain ATCC BAA-1158 / Py2).